A 701-amino-acid chain; its full sequence is Elongation factor G (701 aa).

The region spanning 11–287 (SRVRNFGIMA…AVVDYLPSPL (277 aa)) is the tr-type G domain. GTP is bound by residues 20 to 27 (AHIDAGKT), 84 to 88 (DTPGH), and 138 to 141 (NKMD).

It belongs to the TRAFAC class translation factor GTPase superfamily. Classic translation factor GTPase family. EF-G/EF-2 subfamily.

It is found in the cytoplasm. Catalyzes the GTP-dependent ribosomal translocation step during translation elongation. During this step, the ribosome changes from the pre-translocational (PRE) to the post-translocational (POST) state as the newly formed A-site-bound peptidyl-tRNA and P-site-bound deacylated tRNA move to the P and E sites, respectively. Catalyzes the coordinated movement of the two tRNA molecules, the mRNA and conformational changes in the ribosome. In Mycobacterium tuberculosis (strain CDC 1551 / Oshkosh), this protein is Elongation factor G (fusA).